A 281-amino-acid chain; its full sequence is Transmembrane protein 41A-A (281 aa).

The signal sequence occupies residues 1–22 (MRSLVGLVAVIVTATFYLYSLS). The segment at 32–56 (HKQSHEGETTDAKDGDEPSEMETAS) is disordered. A compositionally biased stretch (basic and acidic residues) spans 34–47 (QSHEGETTDAKDGD). 5 helical membrane-spanning segments follow: residues 84–104 (GYVLLLFCSAYLYKQAFAIPG), 107–127 (FLNILAGALFGTWFGLLLTCV), 170–190 (LFFFLLFLRFFPMSPNWFLNM), 197–217 (IPVTLFFMAVFIGLMPYNFIC), and 236–256 (WSVVLKLLLTACVALLPGALI).

The protein belongs to the TMEM41 family.

It is found in the membrane. The protein is Transmembrane protein 41A-A (tmem41aa) of Danio rerio (Zebrafish).